A 363-amino-acid polypeptide reads, in one-letter code: UDP-N-acetylglucosamine--N-acetylmuramyl-(pentapeptide) pyrophosphoryl-undecaprenol N-acetylglucosamine transferase (363 aa).

Residues 10 to 12 (TGG), asparagine 124, serine 195, isoleucine 249, and glutamine 294 contribute to the UDP-N-acetyl-alpha-D-glucosamine site.

This sequence belongs to the glycosyltransferase 28 family. MurG subfamily.

The protein localises to the cell membrane. The enzyme catalyses Mur2Ac(oyl-L-Ala-gamma-D-Glu-L-Lys-D-Ala-D-Ala)-di-trans,octa-cis-undecaprenyl diphosphate + UDP-N-acetyl-alpha-D-glucosamine = beta-D-GlcNAc-(1-&gt;4)-Mur2Ac(oyl-L-Ala-gamma-D-Glu-L-Lys-D-Ala-D-Ala)-di-trans,octa-cis-undecaprenyl diphosphate + UDP + H(+). The protein operates within cell wall biogenesis; peptidoglycan biosynthesis. In terms of biological role, cell wall formation. Catalyzes the transfer of a GlcNAc subunit on undecaprenyl-pyrophosphoryl-MurNAc-pentapeptide (lipid intermediate I) to form undecaprenyl-pyrophosphoryl-MurNAc-(pentapeptide)GlcNAc (lipid intermediate II). This is UDP-N-acetylglucosamine--N-acetylmuramyl-(pentapeptide) pyrophosphoryl-undecaprenol N-acetylglucosamine transferase from Leuconostoc mesenteroides subsp. mesenteroides (strain ATCC 8293 / DSM 20343 / BCRC 11652 / CCM 1803 / JCM 6124 / NCDO 523 / NBRC 100496 / NCIMB 8023 / NCTC 12954 / NRRL B-1118 / 37Y).